Here is a 169-residue protein sequence, read N- to C-terminus: 6,7-dimethyl-8-ribityllumazine synthase (169 aa).

Residues Phe24, 58-60 (ALE), and 82-84 (AVI) contribute to the 5-amino-6-(D-ribitylamino)uracil site. Residue 87–88 (ET) coordinates (2S)-2-hydroxy-3-oxobutyl phosphate. His90 serves as the catalytic Proton donor. 5-amino-6-(D-ribitylamino)uracil is bound at residue Asn115. Arg129 contributes to the (2S)-2-hydroxy-3-oxobutyl phosphate binding site.

This sequence belongs to the DMRL synthase family.

The enzyme catalyses (2S)-2-hydroxy-3-oxobutyl phosphate + 5-amino-6-(D-ribitylamino)uracil = 6,7-dimethyl-8-(1-D-ribityl)lumazine + phosphate + 2 H2O + H(+). It participates in cofactor biosynthesis; riboflavin biosynthesis; riboflavin from 2-hydroxy-3-oxobutyl phosphate and 5-amino-6-(D-ribitylamino)uracil: step 1/2. Catalyzes the formation of 6,7-dimethyl-8-ribityllumazine by condensation of 5-amino-6-(D-ribitylamino)uracil with 3,4-dihydroxy-2-butanone 4-phosphate. This is the penultimate step in the biosynthesis of riboflavin. The polypeptide is 6,7-dimethyl-8-ribityllumazine synthase (Burkholderia vietnamiensis (strain G4 / LMG 22486) (Burkholderia cepacia (strain R1808))).